The following is a 776-amino-acid chain: Mitochondrial intermediate peptidase (776 aa).

The N-terminal 38 residues, 1–38 (MLNSARTVLARHSARQLYRFRGCLVHQQRHRHQVQRTL), are a transit peptide targeting the mitochondrion. Histidine 560 contacts Zn(2+). Residue glutamate 561 is part of the active site. 2 residues coordinate Zn(2+): histidine 564 and histidine 567.

Belongs to the peptidase M3 family. The cofactor is Zn(2+).

Its subcellular location is the mitochondrion matrix. The catalysed reaction is Release of an N-terminal octapeptide as second stage of processing of some proteins imported into the mitochondrion.. In terms of biological role, cleaves proteins, imported into the mitochondrion, to their mature size. While most mitochondrial precursor proteins are processed to the mature form in one step by mitochondrial processing peptidase (MPP), the sequential cleavage by MIP of an octapeptide after initial processing by MPP is a required step for a subgroup of nuclear-encoded precursor proteins destined for the matrix or the inner membrane. The chain is Mitochondrial intermediate peptidase (OCT1) from Coprinopsis cinerea (strain Okayama-7 / 130 / ATCC MYA-4618 / FGSC 9003) (Inky cap fungus).